A 331-amino-acid chain; its full sequence is Ornithine lipid hydroxylase OlsE (331 aa).

Transmembrane regions (helical) follow at residues 13 to 33 (VSSLLWPAILCAGLTGAYFAF), 37 to 57 (MHLLWFNVVYLSTVAIIALFE), 85 to 105 (GGVQIAAAIGTSFPMAVATVA), 120 to 140 (WPMAFQVVLGLVIAEFGLYMA), and 189 to 209 (LLGAPLPVFLWIGAVTAFIGL). Residues 126–260 (VVLGLVIAEF…LVIWDQLLGT (135 aa)) form the Fatty acid hydroxylase domain.

It belongs to the sterol desaturase family.

Its subcellular location is the cell inner membrane. The protein operates within lipid metabolism. In terms of biological role, involved in the biosynthesis of ornithine lipids (OLs), which are phosphorus-free membrane lipids. Is responsible for the hydroxylation of OL within the ornithine moiety. The chain is Ornithine lipid hydroxylase OlsE from Rhizobium tropici.